Reading from the N-terminus, the 437-residue chain is Trigger factor (437 aa).

Residues 163 to 248 (GDRVIIDFEG…LNNVSEATLP (86 aa)) form the PPIase FKBP-type domain.

Belongs to the FKBP-type PPIase family. Tig subfamily.

The protein localises to the cytoplasm. It catalyses the reaction [protein]-peptidylproline (omega=180) = [protein]-peptidylproline (omega=0). Functionally, involved in protein export. Acts as a chaperone by maintaining the newly synthesized protein in an open conformation. Functions as a peptidyl-prolyl cis-trans isomerase. This is Trigger factor (tig) from Neisseria meningitidis serogroup B (strain ATCC BAA-335 / MC58).